The sequence spans 329 residues: Glycerol-3-phosphate dehydrogenase [NAD(P)+] (329 aa).

NADPH contacts are provided by Ser10, Trp11, Arg31, and Lys105. Residues Lys105, Gly134, and Ser136 each coordinate sn-glycerol 3-phosphate. Residue Ala138 coordinates NADPH. Sn-glycerol 3-phosphate contacts are provided by Lys189, Asp242, Ser252, Arg253, and Asn254. The active-site Proton acceptor is the Lys189. An NADPH-binding site is contributed by Arg253. The NADPH site is built by Val277 and Glu279.

This sequence belongs to the NAD-dependent glycerol-3-phosphate dehydrogenase family.

It localises to the cytoplasm. The enzyme catalyses sn-glycerol 3-phosphate + NAD(+) = dihydroxyacetone phosphate + NADH + H(+). It carries out the reaction sn-glycerol 3-phosphate + NADP(+) = dihydroxyacetone phosphate + NADPH + H(+). The protein operates within membrane lipid metabolism; glycerophospholipid metabolism. Its function is as follows. Catalyzes the reduction of the glycolytic intermediate dihydroxyacetone phosphate (DHAP) to sn-glycerol 3-phosphate (G3P), the key precursor for phospholipid synthesis. This chain is Glycerol-3-phosphate dehydrogenase [NAD(P)+], found in Neisseria meningitidis serogroup C (strain 053442).